A 797-amino-acid chain; its full sequence is MAP/microtubule affinity-regulating kinase 3 (797 aa).

Residues 1-35 form a disordered region; sequence MSTRTPLPTVNERDTENHISHGDGRQEVTSRTGRS. Over residues 11–28 the composition is skewed to basic and acidic residues; that stretch reads NERDTENHISHGDGRQEV. S42 carries the phosphoserine modification. A Protein kinase domain is found at 56–307; that stretch reads YRLLKTIGKG…LEQIMKDRWI (252 aa). ATP-binding positions include 62-70 and K85; that span reads IGKGNFAKV. Residue D178 is the Proton acceptor of the active site. Residue T211 is modified to Phosphothreonine; by LKB1. One can recognise a UBA domain in the interval 326–365; sequence ISDQKRIDIMVGMGYSQEEIQESLSKMKYDEITATYLLLG. 8 positions are modified to phosphoserine: S368, S374, S376, S380, S383, S400, S419, and S469. Disordered regions lie at residues 372–504 and 585–701; these read DASD…GMTR and PDQR…KPRS. Residues 374–385 are compositionally biased toward low complexity; the sequence is SDSSSSSNLSLA. The segment covering 391-400 has biased composition (polar residues); it reads SDLSNSTGQS. 2 stretches are compositionally biased toward polar residues: residues 492–504 and 585–602; these read VPSS…GMTR and PDQR…SATT. Phosphoserine is present on residues S593 and S596. A Phosphothreonine modification is found at T602. Position 617 is a phosphothreonine; by PKC/PRKCZ (T617). Residues S636, S651, and S654 each carry the phosphoserine modification. Residues 637–664 are compositionally biased toward polar residues; that stretch reads PSLSHEATPLSQTRSRGSTNLFSKLTSK. The segment covering 669 to 678 has biased composition (basic and acidic residues); it reads LPTEYERNGR. At S687 the chain carries Phosphoserine. A compositionally biased stretch (basic and acidic residues) spans 689–699; that stretch reads EQKDENREAKP. Positions 748-797 constitute a KA1 domain; that stretch reads DGHAESLVQWEMEVCKLPRLSLNGVRFKRISGTSIAFKNIASKIANELKL.

Belongs to the protein kinase superfamily. CAMK Ser/Thr protein kinase family. SNF1 subfamily. Interacts with MAPT/TAU. Interacts with DLG5 (via coiled-coil domain). Interacts with STK3/MST2 and STK4/MST1 in the presence of DLG5. Interacts with YWHAB, YWHAG, YWHAQ and YWHAZ. Interacts with PKP2 (via N-terminus). Interacts with CDC25C. Interacts with KSR1. Post-translationally, phosphorylated at Thr-211 by STK11/LKB1 in complex with STE20-related adapter-alpha (STRADA) pseudo kinase and CAB39. Phosphorylation at Thr-617 by PRKCZ/aPKC inhibits the kinase activity.

Its subcellular location is the cell membrane. It is found in the cell projection. The protein localises to the dendrite. The protein resides in the cytoplasm. The catalysed reaction is L-seryl-[protein] + ATP = O-phospho-L-seryl-[protein] + ADP + H(+). The enzyme catalyses L-threonyl-[protein] + ATP = O-phospho-L-threonyl-[protein] + ADP + H(+). Activated by phosphorylation on Thr-211. Inhibited by phosphorylation on Thr-617. In terms of biological role, serine/threonine-protein kinase. Involved in the specific phosphorylation of microtubule-associated proteins for MAP2 and MAP4. Phosphorylates the microtubule-associated protein MAPT/TAU. Phosphorylates CDC25C on 'Ser-216'. Regulates localization and activity of some histone deacetylases by mediating phosphorylation of HDAC7, promoting subsequent interaction between HDAC7 and 14-3-3 and export from the nucleus. Regulates localization and activity of MITF by mediating its phosphorylation, promoting subsequent interaction between MITF and 14-3-3 and retention in the cytosol. Negatively regulates the Hippo signaling pathway and antagonizes the phosphorylation of LATS1. Cooperates with DLG5 to inhibit the kinase activity of STK3/MST2 toward LATS1. Phosphorylates PKP2 and KSR1. The polypeptide is MAP/microtubule affinity-regulating kinase 3 (Mark3) (Rattus norvegicus (Rat)).